We begin with the raw amino-acid sequence, 511 residues long: Small ribosomal subunit protein uS4m (511 aa).

Residues 202–272 (KRLDVVLYRS…IKNNLFSNIN (71 aa)) enclose the S4 RNA-binding domain.

The protein belongs to the universal ribosomal protein uS4 family.

It localises to the mitochondrion. This Prototheca wickerhamii protein is Small ribosomal subunit protein uS4m (RPS4).